The sequence spans 283 residues: MRDSQNTAQTLTESLKYFLKYRDQTVVIKYGGNAMIDEKVKESILKDILLLKTVGIKVVLVHGGGPAIGELLEKYEQKSQFVQGLRVTDKKTAQLALTALAGKVNKSLVQDIIRLGGNAIGVSGIDGKLIEAKPISEDLGYVGEITAIHPEIIERINQTDAVPVIASAGIGLDGEIYNVNADTAASRIAGALSAEQFILLSDVRGLYGNFPDEESFIDEINLTNLEKLVKEKKITDGMIPKIEAIKYAMFEGLGQAVLLDGRVPHALLLELFTDKGQGTMINH.

Residues glycine 64–glycine 65, arginine 86, and asparagine 178 each bind substrate.

The protein belongs to the acetylglutamate kinase family. ArgB subfamily.

It localises to the cytoplasm. It carries out the reaction N-acetyl-L-glutamate + ATP = N-acetyl-L-glutamyl 5-phosphate + ADP. It participates in amino-acid biosynthesis; L-arginine biosynthesis; N(2)-acetyl-L-ornithine from L-glutamate: step 2/4. In terms of biological role, catalyzes the ATP-dependent phosphorylation of N-acetyl-L-glutamate. The polypeptide is Acetylglutamate kinase (Lactococcus lactis subsp. cremoris (strain MG1363)).